Here is a 429-residue protein sequence, read N- to C-terminus: Keratin, type I cytoskeletal 18 (429 aa).

The interval 2-78 (SYSRSVYSSS…NVNLIGGGQN (77 aa)) is head. Residues 79–114 (EKETMQDLNDRLASYLERVRSLEAANKKLEVQIRQH) form a coil 1A region. Residues 79-389 (EKETMQDLND…RLLEGDGSFD (311 aa)) enclose the IF rod domain. Positions 115 to 130 (TEKKGPSKDWSPYYKT) are linker 1. Residues 131–222 (IEDLRKQVFD…KNHQDDVTEL (92 aa)) are coil 1B. The interval 223–246 (QAQVARSAVTVEVDAPKSQDLGKI) is linker 12. The tract at residues 247–385 (MTELRAQYDG…HTYRRLLEGD (139 aa)) is coil 2. Positions 386–429 (GSFDLQDAVPTVTTQTVKKVITTTQRIVDGKVVSESNDTEVLKS) are tail.

The protein belongs to the intermediate filament family. In terms of assembly, heterotetramer of two type I and two type II keratins. Keratin-18 associates with keratin-8. Phosphorylated. Post-translationally, proteolytically cleaved by caspases during epithelial cell apoptosis.

In terms of biological role, when phosphorylated, plays a role in filament reorganization. This Xenopus tropicalis (Western clawed frog) protein is Keratin, type I cytoskeletal 18.